A 310-amino-acid polypeptide reads, in one-letter code: tRNA-cytidine(32) 2-sulfurtransferase (310 aa).

The PP-loop motif motif lies at 47-52 (SGGKDS). [4Fe-4S] cluster-binding residues include Cys-122, Cys-125, and Cys-213.

The protein belongs to the TtcA family. In terms of assembly, homodimer. Mg(2+) is required as a cofactor. It depends on [4Fe-4S] cluster as a cofactor.

It localises to the cytoplasm. It carries out the reaction cytidine(32) in tRNA + S-sulfanyl-L-cysteinyl-[cysteine desulfurase] + AH2 + ATP = 2-thiocytidine(32) in tRNA + L-cysteinyl-[cysteine desulfurase] + A + AMP + diphosphate + H(+). The protein operates within tRNA modification. Its function is as follows. Catalyzes the ATP-dependent 2-thiolation of cytidine in position 32 of tRNA, to form 2-thiocytidine (s(2)C32). The sulfur atoms are provided by the cysteine/cysteine desulfurase (IscS) system. The polypeptide is tRNA-cytidine(32) 2-sulfurtransferase (Cronobacter sakazakii (strain ATCC BAA-894) (Enterobacter sakazakii)).